Reading from the N-terminus, the 895-residue chain is Protein translocase subunit SecA (895 aa).

ATP-binding positions include glutamine 87, 105-109, and aspartate 512; that span reads GEGKT. Over residues 833-852 the composition is skewed to basic and acidic residues; sequence TQEEVEQAERQRQEMAKRET. A disordered region spans residues 833–895; it reads TQEEVEQAER…KHCHGSKAKY (63 aa). 4 residues coordinate Zn(2+): cysteine 877, cysteine 879, cysteine 888, and histidine 889. The segment covering 883–895 has biased composition (basic residues); it reads KKYKHCHGSKAKY.

Belongs to the SecA family. In terms of assembly, monomer and homodimer. Part of the essential Sec protein translocation apparatus which comprises SecA, SecYEG and auxiliary proteins SecDF-YajC and YidC. Zn(2+) serves as cofactor.

The protein resides in the cell inner membrane. It localises to the cytoplasm. The catalysed reaction is ATP + H2O + cellular proteinSide 1 = ADP + phosphate + cellular proteinSide 2.. Functionally, part of the Sec protein translocase complex. Interacts with the SecYEG preprotein conducting channel. Has a central role in coupling the hydrolysis of ATP to the transfer of proteins into and across the cell membrane, serving both as a receptor for the preprotein-SecB complex and as an ATP-driven molecular motor driving the stepwise translocation of polypeptide chains across the membrane. The protein is Protein translocase subunit SecA of Pasteurella multocida (strain Pm70).